The following is a 160-amino-acid chain: 2-C-methyl-D-erythritol 2,4-cyclodiphosphate synthase (160 aa).

A divalent metal cation is bound by residues Asp9 and His11. Residues 9-11 (DVH) and 35-36 (HS) each bind 4-CDP-2-C-methyl-D-erythritol 2-phosphate. A divalent metal cation is bound at residue His43. 4-CDP-2-C-methyl-D-erythritol 2-phosphate contacts are provided by residues 57-59 (DIG), 62-66 (FPDTD), 133-136 (TTTE), Phe140, and Arg143.

This sequence belongs to the IspF family. Homotrimer. The cofactor is a divalent metal cation.

The enzyme catalyses 4-CDP-2-C-methyl-D-erythritol 2-phosphate = 2-C-methyl-D-erythritol 2,4-cyclic diphosphate + CMP. It participates in isoprenoid biosynthesis; isopentenyl diphosphate biosynthesis via DXP pathway; isopentenyl diphosphate from 1-deoxy-D-xylulose 5-phosphate: step 4/6. Its function is as follows. Involved in the biosynthesis of isopentenyl diphosphate (IPP) and dimethylallyl diphosphate (DMAPP), two major building blocks of isoprenoid compounds. Catalyzes the conversion of 4-diphosphocytidyl-2-C-methyl-D-erythritol 2-phosphate (CDP-ME2P) to 2-C-methyl-D-erythritol 2,4-cyclodiphosphate (ME-CPP) with a corresponding release of cytidine 5-monophosphate (CMP). The polypeptide is 2-C-methyl-D-erythritol 2,4-cyclodiphosphate synthase (Haemophilus ducreyi (strain 35000HP / ATCC 700724)).